The primary structure comprises 439 residues: Ribosomal protein uS12 methylthiotransferase RimO (439 aa).

Residues Lys-7–Asn-119 form the MTTase N-terminal domain. The [4Fe-4S] cluster site is built by Cys-16, Cys-50, Cys-82, Cys-151, Cys-155, and Cys-158. One can recognise a Radical SAM core domain in the interval Thr-137 to Lys-368.

The protein belongs to the methylthiotransferase family. RimO subfamily. [4Fe-4S] cluster serves as cofactor.

Its subcellular location is the cytoplasm. It carries out the reaction L-aspartate(89)-[ribosomal protein uS12]-hydrogen + (sulfur carrier)-SH + AH2 + 2 S-adenosyl-L-methionine = 3-methylsulfanyl-L-aspartate(89)-[ribosomal protein uS12]-hydrogen + (sulfur carrier)-H + 5'-deoxyadenosine + L-methionine + A + S-adenosyl-L-homocysteine + 2 H(+). Functionally, catalyzes the methylthiolation of an aspartic acid residue of ribosomal protein uS12. The chain is Ribosomal protein uS12 methylthiotransferase RimO from Helicobacter pylori (strain G27).